A 113-amino-acid chain; its full sequence is Large ribosomal subunit protein uL24 (113 aa).

This sequence belongs to the universal ribosomal protein uL24 family. In terms of assembly, part of the 50S ribosomal subunit.

One of two assembly initiator proteins, it binds directly to the 5'-end of the 23S rRNA, where it nucleates assembly of the 50S subunit. Functionally, one of the proteins that surrounds the polypeptide exit tunnel on the outside of the subunit. The chain is Large ribosomal subunit protein uL24 from Chlamydia abortus (strain DSM 27085 / S26/3) (Chlamydophila abortus).